A 426-amino-acid chain; its full sequence is 3-phosphoshikimate 1-carboxyvinyltransferase (426 aa).

Residues Lys22, Ser23, and Arg27 each contribute to the 3-phosphoshikimate site. Lys22 serves as a coordination point for phosphoenolpyruvate. Residues Gly96 and Arg124 each contribute to the phosphoenolpyruvate site. The 3-phosphoshikimate site is built by Ser170, Ser171, Gln172, Ser198, Asp314, Asn337, and Lys341. Gln172 is a phosphoenolpyruvate binding site. The active-site Proton acceptor is Asp314. Arg345, Arg387, and Lys412 together coordinate phosphoenolpyruvate.

It belongs to the EPSP synthase family. As to quaternary structure, monomer.

The protein localises to the cytoplasm. It carries out the reaction 3-phosphoshikimate + phosphoenolpyruvate = 5-O-(1-carboxyvinyl)-3-phosphoshikimate + phosphate. It functions in the pathway metabolic intermediate biosynthesis; chorismate biosynthesis; chorismate from D-erythrose 4-phosphate and phosphoenolpyruvate: step 6/7. In terms of biological role, catalyzes the transfer of the enolpyruvyl moiety of phosphoenolpyruvate (PEP) to the 5-hydroxyl of shikimate-3-phosphate (S3P) to produce enolpyruvyl shikimate-3-phosphate and inorganic phosphate. The protein is 3-phosphoshikimate 1-carboxyvinyltransferase of Shewanella baltica (strain OS195).